Reading from the N-terminus, the 228-residue chain is Ribonuclease 3 (228 aa).

Positions 5–127 (LMALQARLQH…VIGAVYLDAG (123 aa)) constitute an RNase III domain. Residue E40 participates in Mg(2+) binding. The active site involves D44. The Mg(2+) site is built by D113 and E116. E116 is an active-site residue. The DRBM domain maps to 154–224 (DPKTELQEWL…AAAMLQTLKA (71 aa)).

It belongs to the ribonuclease III family. In terms of assembly, homodimer. Mg(2+) serves as cofactor.

It is found in the cytoplasm. It catalyses the reaction Endonucleolytic cleavage to 5'-phosphomonoester.. Digests double-stranded RNA. Involved in the processing of primary rRNA transcript to yield the immediate precursors to the large and small rRNAs (23S and 16S). Processes some mRNAs, and tRNAs when they are encoded in the rRNA operon. Processes pre-crRNA and tracrRNA of type II CRISPR loci if present in the organism. The polypeptide is Ribonuclease 3 (Albidiferax ferrireducens (strain ATCC BAA-621 / DSM 15236 / T118) (Rhodoferax ferrireducens)).